The chain runs to 122 residues: Large ribosomal subunit protein uL14 (122 aa).

This sequence belongs to the universal ribosomal protein uL14 family. In terms of assembly, part of the 50S ribosomal subunit. Forms a cluster with proteins L3 and L19. In the 70S ribosome, L14 and L19 interact and together make contacts with the 16S rRNA in bridges B5 and B8.

Binds to 23S rRNA. Forms part of two intersubunit bridges in the 70S ribosome. The chain is Large ribosomal subunit protein uL14 from Phenylobacterium zucineum (strain HLK1).